We begin with the raw amino-acid sequence, 376 residues long: Chaperone protein DnaJ (376 aa).

The region spanning 4–68 (DYYEILGVAR…ETRARYDRFG (65 aa)) is the J domain. The segment at 102-121 (GGMGGPTQQRRRGGPARGDD) is disordered. A CR-type zinc finger spans residues 136–218 (GGEKEIRISH…CDGKGTNQVT (83 aa)). The Zn(2+) site is built by Cys-149, Cys-152, Cys-166, Cys-169, Cys-192, Cys-195, Cys-206, and Cys-209. CXXCXGXG motif repeat units follow at residues 149-156 (CETCSGSG), 166-173 (CSTCSGSG), 192-199 (CPTCNGTG), and 206-213 (CDACDGKG).

Belongs to the DnaJ family. As to quaternary structure, homodimer. Zn(2+) serves as cofactor.

Its subcellular location is the cytoplasm. Participates actively in the response to hyperosmotic and heat shock by preventing the aggregation of stress-denatured proteins and by disaggregating proteins, also in an autonomous, DnaK-independent fashion. Unfolded proteins bind initially to DnaJ; upon interaction with the DnaJ-bound protein, DnaK hydrolyzes its bound ATP, resulting in the formation of a stable complex. GrpE releases ADP from DnaK; ATP binding to DnaK triggers the release of the substrate protein, thus completing the reaction cycle. Several rounds of ATP-dependent interactions between DnaJ, DnaK and GrpE are required for fully efficient folding. Also involved, together with DnaK and GrpE, in the DNA replication of plasmids through activation of initiation proteins. This chain is Chaperone protein DnaJ, found in Trichormus variabilis (strain ATCC 29413 / PCC 7937) (Anabaena variabilis).